Here is a 239-residue protein sequence, read N- to C-terminus: Ribonuclease PH (239 aa).

Residues R87 and 125–127 (GTR) contribute to the phosphate site.

This sequence belongs to the RNase PH family. Homohexameric ring arranged as a trimer of dimers.

The catalysed reaction is tRNA(n+1) + phosphate = tRNA(n) + a ribonucleoside 5'-diphosphate. In terms of biological role, phosphorolytic 3'-5' exoribonuclease that plays an important role in tRNA 3'-end maturation. Removes nucleotide residues following the 3'-CCA terminus of tRNAs; can also add nucleotides to the ends of RNA molecules by using nucleoside diphosphates as substrates, but this may not be physiologically important. Probably plays a role in initiation of 16S rRNA degradation (leading to ribosome degradation) during starvation. The protein is Ribonuclease PH of Acaryochloris marina (strain MBIC 11017).